A 352-amino-acid polypeptide reads, in one-letter code: MALIHKRQALNSRGVDWSELPEDVIRLVLRRLRLSDFHRARAVCSTWCRVWGDCVSKPNQVPWLILFPDPAQIRRSCMLYNPQEEENVYTIQDLGVDPCLASCGTWLLALFSVLYRKGHFASKAEMMGYPSTDKAVVWIDEKTKDYVVACSWGGDKHAAFCKKGDCEWRQIPPLLGCSDIALKDHKLYIYYEDGSIGISDLKFVTKTAHVQLYPFRFRLGSFSPYDTIWTDYLDWKTNIVITISGDFLMVGCVLKRRDLSWLFRGDQAVILDLGITVQASSDIQGITRNSTYFSGLPSSQKDVFVFNLSSQKVQRLSSSSISSRPFSNARWLFPTSYFTMILFPNIFVFVQL.

Residues 14-60 (GVDWSELPEDVIRLVLRRLRLSDFHRARAVCSTWCRVWGDCVSKPNQ) form the F-box domain.

The sequence is that of Putative F-box protein At5g14160 from Arabidopsis thaliana (Mouse-ear cress).